A 290-amino-acid chain; its full sequence is Bifunctional protein FolD (290 aa).

Residues 167–169 (GRS), S192, and I233 contribute to the NADP(+) site.

It belongs to the tetrahydrofolate dehydrogenase/cyclohydrolase family. Homodimer.

It catalyses the reaction (6R)-5,10-methylene-5,6,7,8-tetrahydrofolate + NADP(+) = (6R)-5,10-methenyltetrahydrofolate + NADPH. It carries out the reaction (6R)-5,10-methenyltetrahydrofolate + H2O = (6R)-10-formyltetrahydrofolate + H(+). The protein operates within one-carbon metabolism; tetrahydrofolate interconversion. Catalyzes the oxidation of 5,10-methylenetetrahydrofolate to 5,10-methenyltetrahydrofolate and then the hydrolysis of 5,10-methenyltetrahydrofolate to 10-formyltetrahydrofolate. The protein is Bifunctional protein FolD of Azorhizobium caulinodans (strain ATCC 43989 / DSM 5975 / JCM 20966 / LMG 6465 / NBRC 14845 / NCIMB 13405 / ORS 571).